We begin with the raw amino-acid sequence, 669 residues long: Cysteine-rich receptor-like protein kinase 10 (669 aa).

The first 34 residues, 1–34, serve as a signal peptide directing secretion; sequence MRRNTDQESPIMSYYSSFFFLFLFSFLTSFRVSA. Residues 35 to 285 lie on the Extracellular side of the membrane; the sequence is QDPTYVYHTC…PRSGKDGNSK (251 aa). Gnk2-homologous domains follow at residues 38 to 142 and 148 to 252; these read TYVY…NQNI and TTGG…IYAF. 4 N-linked (GlcNAc...) asparagine glycosylation sites follow: N49, N53, N71, and N80. Cystine bridges form between C96–C105 and C108–C133. N-linked (GlcNAc...) asparagine glycans are attached at residues N114, N159, N185, and N196. Disulfide bonds link C209–C218 and C221–C243. Residues 260 to 274 show a composition bias toward pro residues; sequence PPPPPPSISTPPVSA. The interval 260–280 is disordered; sequence PPPPPPSISTPPVSAPPRSGK. A helical transmembrane segment spans residues 286–306; that stretch reads VLVIAIVVPIIVAVLLFIAGY. Residues 307–669 are Cytoplasmic-facing; that stretch reads CFLTRRARKS…DASITDIHPR (363 aa). Residues 348-634 form the Protein kinase domain; that stretch reads FVESNKIGQG…TLPVPRQPGL (287 aa). Residues 354 to 362 and K376 each bind ATP; that span reads IGQGGFGEV. A Phosphotyrosine modification is found at Y421. The active-site Proton acceptor is the D473. At S477 the chain carries Phosphoserine. T513 is subject to Phosphothreonine. Y521 carries the post-translational modification Phosphotyrosine.

This sequence belongs to the protein kinase superfamily. Ser/Thr protein kinase family. CRK subfamily. As to quaternary structure, interacts with CRKIP1 (KAPP), CRKIP2 and CRKIP3, three kinase-associated type 2C proteins.

Its subcellular location is the membrane. It carries out the reaction L-seryl-[protein] + ATP = O-phospho-L-seryl-[protein] + ADP + H(+). The catalysed reaction is L-threonyl-[protein] + ATP = O-phospho-L-threonyl-[protein] + ADP + H(+). The chain is Cysteine-rich receptor-like protein kinase 10 (CRK10) from Arabidopsis thaliana (Mouse-ear cress).